The following is a 347-amino-acid chain: Quinolinate synthase (347 aa).

Iminosuccinate is bound by residues His-47 and Ser-68. Cys-113 is a [4Fe-4S] cluster binding site. Residues 139 to 141 (YAN) and Ser-156 each bind iminosuccinate. [4Fe-4S] cluster is bound at residue Cys-200. Iminosuccinate-binding positions include 226–228 (HPE) and Thr-243. Cys-297 contacts [4Fe-4S] cluster.

The protein belongs to the quinolinate synthase family. Type 1 subfamily. [4Fe-4S] cluster serves as cofactor.

It localises to the cytoplasm. The enzyme catalyses iminosuccinate + dihydroxyacetone phosphate = quinolinate + phosphate + 2 H2O + H(+). It functions in the pathway cofactor biosynthesis; NAD(+) biosynthesis; quinolinate from iminoaspartate: step 1/1. Its function is as follows. Catalyzes the condensation of iminoaspartate with dihydroxyacetone phosphate to form quinolinate. This Escherichia fergusonii (strain ATCC 35469 / DSM 13698 / CCUG 18766 / IAM 14443 / JCM 21226 / LMG 7866 / NBRC 102419 / NCTC 12128 / CDC 0568-73) protein is Quinolinate synthase.